Consider the following 201-residue polypeptide: 3-isopropylmalate dehydratase small subunit (201 aa).

Belongs to the LeuD family. LeuD type 1 subfamily. As to quaternary structure, heterodimer of LeuC and LeuD.

The enzyme catalyses (2R,3S)-3-isopropylmalate = (2S)-2-isopropylmalate. Its pathway is amino-acid biosynthesis; L-leucine biosynthesis; L-leucine from 3-methyl-2-oxobutanoate: step 2/4. Functionally, catalyzes the isomerization between 2-isopropylmalate and 3-isopropylmalate, via the formation of 2-isopropylmaleate. The polypeptide is 3-isopropylmalate dehydratase small subunit (Nitrobacter hamburgensis (strain DSM 10229 / NCIMB 13809 / X14)).